A 115-amino-acid polypeptide reads, in one-letter code: Nucleoid-associated protein NATL1_00191 (115 aa).

The tract at residues 89 to 115 (STSTMKERMEDLTGGFKLNLPGMGEES) is disordered.

It belongs to the YbaB/EbfC family. As to quaternary structure, homodimer.

The protein resides in the cytoplasm. It localises to the nucleoid. Binds to DNA and alters its conformation. May be involved in regulation of gene expression, nucleoid organization and DNA protection. This chain is Nucleoid-associated protein NATL1_00191, found in Prochlorococcus marinus (strain NATL1A).